We begin with the raw amino-acid sequence, 706 residues long: Frizzled-6 (706 aa).

Positions 1-18 (MEMFTFLLTCIFLPLLRG) are cleaved as a signal peptide. In terms of domain architecture, FZ spans 19–132 (HSLFTCEPIT…CDRLQYCDET (114 aa)). At 19–201 (HSLFTCEPIT…SDELEFAKSF (183 aa)) the chain is on the extracellular side. Intrachain disulfides connect Cys24–Cys85, Cys32–Cys78, Cys69–Cys106, Cys95–Cys129, and Cys99–Cys123. Asn38 carries an N-linked (GlcNAc...) asparagine glycan. The chain crosses the membrane as a helical span at residues 202–222 (IGTVSIFCLCATLFTFLTFLI). Residues 223 to 233 (DVRRFRYPERP) are Cytoplasmic-facing. Residues 234-254 (IIYYSVCYSIVSLMYFIGFLL) form a helical membrane-spanning segment. Over 255-284 (GDSTACNKADEKLELGDTVVLGSQNKACTV) the chain is Extracellular. Residues 285 to 305 (LFMLLYFFTMAGTVWWVILTI) form a helical membrane-spanning segment. Topologically, residues 306–324 (TWFLAAGRKWSCEAIEQKA) are cytoplasmic. A helical transmembrane segment spans residues 325-345 (VWFHAVAWGTPGFLTVMLLAM). The Extracellular portion of the chain corresponds to 346–370 (NKVEGDNISGVCFVGLYDLDASRYF). Asn352 carries N-linked (GlcNAc...) asparagine glycosylation. Residues 371–391 (VLLPLCLCVFVGLSLLLAGII) traverse the membrane as a helical segment. Residues 392-416 (SLNHVRQVIQHDGRNQEKLKKFMIR) lie on the Cytoplasmic side of the membrane. Residues 417-437 (IGVFSGLYLVPLVTLLGCYVY) form a helical membrane-spanning segment. At 438-473 (EQVNRITWEITWVSDHCRQYHIPCPYQAKAKARPEL) the chain is on the extracellular side. The helical transmembrane segment at 474–494 (ALFMIKYLMTLIVGISAVFWV) threads the bilayer. Residues 495–706 (GSKKTCTEWA…EQGGGCHSDT (212 aa)) lie on the Cytoplasmic side of the membrane. The short motif at 498–503 (KTCTEW) is the Lys-Thr-X-X-X-Trp motif, mediates interaction with the PDZ domain of Dvl family members element. The segment at 588–706 (EIQTSPETSM…EQGGGCHSDT (119 aa)) is disordered. Residues 646 to 658 (ARSEGRISPKSDI) are compositionally biased toward basic and acidic residues. Position 653 is a phosphoserine (Ser653). Residues 662-672 (GLAQSNNLQVP) show a composition bias toward polar residues. The span at 673–685 (SSSEPSSLKGSTS) shows a compositional bias: low complexity. The span at 694–706 (VRKEQGGGCHSDT) shows a compositional bias: basic and acidic residues.

It belongs to the G-protein coupled receptor Fz/Smo family. In terms of assembly, interacts with LMBR1L. In terms of processing, ubiquitinated by ZNRF3, leading to its degradation by the proteasome. Detected in adult heart, brain, placenta, lung, liver, skeletal muscle, kidney, pancreas, thymus, prostate, testis, ovary, small intestine and colon. In the fetus, expressed in brain, lung, liver and kidney.

It localises to the membrane. Its subcellular location is the cell membrane. The protein resides in the cell surface. It is found in the apical cell membrane. The protein localises to the cytoplasmic vesicle membrane. It localises to the endoplasmic reticulum membrane. In terms of biological role, receptor for Wnt proteins. Most of frizzled receptors are coupled to the beta-catenin canonical signaling pathway, which leads to the activation of disheveled proteins, inhibition of GSK-3 kinase, nuclear accumulation of beta-catenin and activation of Wnt target genes. A second signaling pathway involving PKC and calcium fluxes has been seen for some family members, but it is not yet clear if it represents a distinct pathway or if it can be integrated in the canonical pathway, as PKC seems to be required for Wnt-mediated inactivation of GSK-3 kinase. Both pathways seem to involve interactions with G-proteins. May be involved in transduction and intercellular transmission of polarity information during tissue morphogenesis and/or in differentiated tissues. Together with FZD3, is involved in the neural tube closure and plays a role in the regulation of the establishment of planar cell polarity (PCP), particularly in the orientation of asymmetric bundles of stereocilia on the apical faces of a subset of auditory and vestibular sensory cells located in the inner ear. This is Frizzled-6 (FZD6) from Homo sapiens (Human).